The chain runs to 777 residues: Serine/threonine-protein kinase PTK2 (777 aa).

A disordered region spans residues 21–174 (NKLRGNNDST…ISSGSASSTN (154 aa)). Residues 30-41 (TPAAAPAPVPTK) are compositionally biased toward low complexity. 2 stretches are compositionally biased toward polar residues: residues 50–61 (AHISRSASTNTP) and 83–133 (RRST…SQHM). Residues 149–172 (SSVRGSSYSRHGSGSHISSGSASS) are compositionally biased toward low complexity. The 308-residue stretch at 222 to 529 (DKDNKTIGSG…MEDLFNDPWF (308 aa)) folds into the Protein kinase domain. ATP-binding positions include 228–236 (IGSGGSSEV) and K252. D355 functions as the Proton acceptor in the catalytic mechanism. Disordered stretches follow at residues 564–705 (DAHP…EITE) and 728–764 (SVSG…KKVV). Polar residues-rich tracts occupy residues 575–592 (TDTN…AGTH) and 648–672 (TNTT…TNEF). The span at 677–694 (NATTTDNDNVNTKATTAD) shows a compositional bias: low complexity. Polar residues predominate over residues 744–756 (NRSIHSNATSTGT).

Belongs to the protein kinase superfamily. Ser/Thr protein kinase family.

The catalysed reaction is L-seryl-[protein] + ATP = O-phospho-L-seryl-[protein] + ADP + H(+). It carries out the reaction L-threonyl-[protein] + ATP = O-phospho-L-threonyl-[protein] + ADP + H(+). This is Serine/threonine-protein kinase PTK2 (PTK2) from Candida glabrata (strain ATCC 2001 / BCRC 20586 / JCM 3761 / NBRC 0622 / NRRL Y-65 / CBS 138) (Yeast).